A 489-amino-acid polypeptide reads, in one-letter code: Serine/arginine-rich splicing factor 4 (489 aa).

Residues 2 to 72 (PRVYIGRLSY…ERVIVEHARG (71 aa)) form the RRM 1 domain. 2 disordered regions span residues 72–95 (GPRRDGSYGSGRSGYGYRRSGRDK) and 169–489 (KIRL…HSRS). Residues Ser-78 and Ser-84 each carry the phosphoserine modification. The 74-residue stretch at 104–177 (YRLIVENLSS…RKIRLVEDKP (74 aa)) folds into the RRM 2 domain. 2 stretches are compositionally biased toward basic residues: residues 179–206 (SRRRRSYSRSRSHSRSRSRSRHSRKSRS) and 214–246 (SHSKSRSRSRSGSHSRSKSRSRSQSRSRSKKEK). Over residues 247–279 (SRSPSKDNKSRSRSRSPDKSRSKSKDHAEDKLQ) the composition is skewed to basic and acidic residues. 3 positions are modified to phosphoserine: Ser-289, Ser-291, and Ser-293. Over residues 293–332 (SRHDSKSRSRSQERRAEEERRRSVSRARSQEKSRSQEKSL) the composition is skewed to basic and acidic residues. Over residues 333 to 356 (LKSRSRSRSRSRSRSKDKRKGRKR) the composition is skewed to basic residues. Basic and acidic residues-rich tracts occupy residues 357–370 (SRDESRSRSRSKSE) and 394–426 (KDTDHSRSPSRSVSKEREHAKAESGQRGSRAEG). Residues Ser-441, Ser-453, and Ser-455 each carry the phosphoserine modification. Composition is skewed to basic residues over residues 456–469 (RSKSASKTRSRSKS) and 479–489 (SRSRSRSHSRS).

The protein belongs to the splicing factor SR family. In terms of assembly, found in a pre-mRNA splicing complex with SRSF4/SFRS4, SRSF5/SFRS5, SNRNP70, SNRPA1, SRRM1 and SRRM2. Interacts with PNN. Post-translationally, extensively phosphorylated on serine residues in the RS domain.

It localises to the nucleus speckle. Plays a role in alternative splice site selection during pre-mRNA splicing. Represses the splicing of MAPT/Tau exon 10. The sequence is that of Serine/arginine-rich splicing factor 4 (Srsf4) from Mus musculus (Mouse).